Here is a 416-residue protein sequence, read N- to C-terminus: Sarcosine oxidase subunit beta (416 aa).

Positions 41, 42, 63, 71, 76, and 78 each coordinate FAD. H182 carries the post-translational modification Tele-8alpha-FMN histidine. V206, G366, and K368 together coordinate FAD.

Belongs to the SoxB family. Heterotetramer composed of subunits alpha (SoxA), beta (SoxB), gamma (SoxG) and delta (SoxD). FAD is required as a cofactor. The cofactor is FMN.

It localises to the cytoplasm. The catalysed reaction is sarcosine + (6S)-5,6,7,8-tetrahydrofolate + O2 = (6R)-5,10-methylene-5,6,7,8-tetrahydrofolate + glycine + H2O2. The enzyme catalyses sarcosine + O2 + H2O = formaldehyde + glycine + H2O2. Its function is as follows. In the presence of tetrahydrofolate, catalyzes the oxidative demethylation of sarcosine to yield glycine, 5,10-methylenetetrahydrofolate and hydrogen peroxide. In the absence of tetrahydrofolate, catalyzes the oxidative demethylation of sarcosine to yield glycine, formaldehyde and hydrogen peroxide. In Rhizobium meliloti (strain 1021) (Ensifer meliloti), this protein is Sarcosine oxidase subunit beta (soxB).